A 61-amino-acid chain; its full sequence is Small ribosomal subunit protein uS14 (61 aa).

Zn(2+) contacts are provided by Cys24, Cys27, Cys40, and Cys43.

It belongs to the universal ribosomal protein uS14 family. Zinc-binding uS14 subfamily. Part of the 30S ribosomal subunit. Contacts proteins S3 and S10. Zn(2+) serves as cofactor.

In terms of biological role, binds 16S rRNA, required for the assembly of 30S particles and may also be responsible for determining the conformation of the 16S rRNA at the A site. The chain is Small ribosomal subunit protein uS14 from Desulfosudis oleivorans (strain DSM 6200 / JCM 39069 / Hxd3) (Desulfococcus oleovorans).